The primary structure comprises 1109 residues: Cation channel sperm-associated auxiliary subunit beta (1109 aa).

At 1–1055 (MESPLIYVML…QIYVDEVPLP (1055 aa)) the chain is on the extracellular side. An intrachain disulfide couples C35 to C60. N-linked (GlcNAc...) asparagine glycans are attached at residues N66, N90, and N118. A disulfide bond links C189 and C302. N-linked (GlcNAc...) asparagine glycosylation occurs at N321. A disulfide bridge links C330 with C343. A glycan (N-linked (GlcNAc...) asparagine) is linked at N672. Disulfide bonds link C720–C818, C831–C1039, C913–C922, and C924–C939. N-linked (GlcNAc...) asparagine glycans are attached at residues N915 and N923. The N-linked (GlcNAc...) asparagine glycan is linked to N1017. The helical transmembrane segment at 1056-1078 (FPGHALIAVATSVVLGVLIFIAF) threads the bilayer. At 1079–1109 (VFQLRNIHPLKALKKSIRGNPGLTSSTTVSS) the chain is on the cytoplasmic side.

As to quaternary structure, component of the CatSper complex or CatSpermasome composed of the core pore-forming members CATSPER1, CATSPER2, CATSPER3 and CATSPER4 as well as auxiliary members CATSPERB, CATSPERG2, CATSPERD, CATSPERE, CATSPERZ, C2CD6/CATSPERT, SLCO6C1, TMEM249, TMEM262 and EFCAB9. HSPA1 may be an additional auxiliary complex member. The core complex members CATSPER1, CATSPER2, CATSPER3 and CATSPER4 form a heterotetrameric channel. The auxiliary CATSPERB, CATSPERG2, CATSPERD and CATSPERE subunits form a pavilion-like structure over the pore which stabilizes the complex through interactions with CATSPER4, CATSPER3, CATSPER1 and CATSPER2 respectively. SLCO6C1 interacts with CATSPERE and TMEM262/CATSPERH interacts with CATSPERB, further stabilizing the complex. C2CD6/CATSPERT interacts at least with CATSPERD and is required for targeting the CatSper complex in the flagellar membrane. In terms of tissue distribution, testis-specific. Specifically present in the principal piece of sperm tail (at protein level). Specifically expressed in the seminiferous tubules but not in the interstitial cells. Within the tubules, it is expressed in spermatocytes and spermatids, but not in spermatogonia.

The protein resides in the cell projection. Its subcellular location is the cilium. The protein localises to the flagellum membrane. Functionally, auxiliary component of the CatSper complex, a complex involved in sperm cell hyperactivation. Sperm cell hyperactivation is needed for sperm motility which is essential late in the preparation of sperm for fertilization. This is Cation channel sperm-associated auxiliary subunit beta from Mus musculus (Mouse).